The following is an 84-amino-acid chain: MNLYLLLGALAIFSLVYDKKENSIFLYLLILFLVFIIVSPAIISKNTESTVEDIPSHKAKSVRKKLEIEQALDAILNKNTSSID.

Interacts with protein Ac75.

The protein localises to the host cytoplasm. Its subcellular location is the host nucleus. Functionally, plays an essential role in budded virion (BV) and occluded derived virion (ODV) development. Participates in intranuclear microvesicle formation, ODV envelopment, and subsequent embedding of virions into occlusion bodies. This chain is Protein Ac76 (Ac76), found in Lepidoptera (butterflies and moths).